Here is a 466-residue protein sequence, read N- to C-terminus: Cytochrome c-552 (466 aa).

The N-terminal stretch at 1–27 (MVRILTKKSFALSALVAASLMASGAMA) is a signal peptide. Heme c is bound at residue His87. Positions 115, 118, and 119 each coordinate heme. Heme c-binding residues include Cys153, Cys156, His157, Cys195, Cys198, and His199. Residues Glu201, Tyr202, Lys250, and Gln252 each coordinate Ca(2+). A substrate-binding site is contributed by Tyr202. His253 contacts substrate. Residues His264, Cys271, Cys274, His275, His290, Cys303, Cys306, His307, and His382 each contribute to the heme c site.

It belongs to the cytochrome c-552 family. It depends on Ca(2+) as a cofactor. Requires heme c as cofactor.

The protein resides in the periplasm. The catalysed reaction is 6 Fe(III)-[cytochrome c] + NH4(+) + 2 H2O = 6 Fe(II)-[cytochrome c] + nitrite + 8 H(+). Its pathway is nitrogen metabolism; nitrate reduction (assimilation). Its function is as follows. Catalyzes the reduction of nitrite to ammonia, consuming six electrons in the process. The protein is Cytochrome c-552 of Shewanella woodyi (strain ATCC 51908 / MS32).